Consider the following 169-residue polypeptide: UPF0303 protein BruAb1_1406 (169 aa).

The protein belongs to the UPF0303 family.

The protein is UPF0303 protein BruAb1_1406 of Brucella abortus biovar 1 (strain 9-941).